The following is a 242-amino-acid chain: Small ribosomal subunit protein uS3 (242 aa).

One can recognise a KH type-2 domain in the interval 39–110; sequence IRRFIHKKYG…QVRINVVEVE (72 aa). Residues 217–242 form a disordered region; it reads TMPVGASPRRRGNRRPQQFEDRSNEG. The span at 233-242 shows a compositional bias: basic and acidic residues; the sequence is QQFEDRSNEG.

It belongs to the universal ribosomal protein uS3 family. Part of the 30S ribosomal subunit. Forms a tight complex with proteins S10 and S14.

Its function is as follows. Binds the lower part of the 30S subunit head. Binds mRNA in the 70S ribosome, positioning it for translation. In Prochlorococcus marinus (strain MIT 9313), this protein is Small ribosomal subunit protein uS3.